Here is a 335-residue protein sequence, read N- to C-terminus: L-tyrosine isonitrile synthase (335 aa).

The protein belongs to the isocyanide synthase family.

The enzyme catalyses D-ribulose 5-phosphate + L-tyrosine = (2S)-3-(4-hydroxyphenyl)-2-isocyanopropanoate + hydroxyacetone + formaldehyde + phosphate + H2O + H(+). In terms of biological role, involved in the biosynthesis of rhabduscin, a tyrosine derivative which is a potent inhibitor of phenoloxidase, a key component of the insect's innate immune system. Responsible for the synthesis of the isonitrile group on tyrosine using the C2 of ribulose 5-phosphate as the source of the carbon atom. This is L-tyrosine isonitrile synthase from Xenorhabdus nematophila (strain ATCC 19061 / DSM 3370 / CCUG 14189 / LMG 1036 / NCIMB 9965 / AN6).